The primary structure comprises 138 residues: Phospholipase A2 group V (138 aa).

An N-terminal signal peptide occupies residues methionine 1–glycine 20. Intrachain disulfides connect cysteine 46/cysteine 137, cysteine 48/cysteine 64, cysteine 63/cysteine 117, cysteine 70/cysteine 110, cysteine 79/cysteine 103, and cysteine 97/cysteine 108. Residues tyrosine 47, glycine 49, and glycine 51 each contribute to the Ca(2+) site. Histidine 67 is a catalytic residue. Residue aspartate 68 coordinates Ca(2+). Aspartate 111 is an active-site residue.

The protein belongs to the phospholipase A2 family. It depends on Ca(2+) as a cofactor. In terms of processing, this enzyme lacks one of the seven disulfide bonds found in similar PLA2 proteins. In terms of tissue distribution, heart, placenta and less abundantly, in lung. Detected in the outer and inner plexiform layers of the retina (at protein level). Expressed in monocytes and macrophages.

It localises to the secreted. Its subcellular location is the cell membrane. It is found in the cytoplasmic vesicle. The protein localises to the phagosome. The protein resides in the recycling endosome. It localises to the golgi apparatus. Its subcellular location is the cis-Golgi network. It is found in the trans-Golgi network. The enzyme catalyses a 1,2-diacyl-sn-glycero-3-phosphocholine + H2O = a 1-acyl-sn-glycero-3-phosphocholine + a fatty acid + H(+). It carries out the reaction 1-hexadecanoyl-2-(9Z-octadecenoyl)-sn-glycero-3-phosphocholine + H2O = 1-hexadecanoyl-sn-glycero-3-phosphocholine + (9Z)-octadecenoate + H(+). It catalyses the reaction 1-hexadecanoyl-2-(5Z,8Z,11Z,14Z-eicosatetraenoyl)-sn-glycero-3-phosphocholine + H2O = 1-hexadecanoyl-sn-glycero-3-phosphocholine + (5Z,8Z,11Z,14Z)-eicosatetraenoate + H(+). The catalysed reaction is 1-hexadecanoyl-2-(9Z,12Z-octadecadienoyl)-sn-glycero-3-phosphoethanolamine + H2O = 1-hexadecanoyl-sn-glycero-3-phosphoethanolamine + (9Z,12Z)-octadecadienoate + H(+). The enzyme catalyses 1-hexadecanoyl-2-(5Z,8Z,11Z,14Z-eicosatetraenoyl)-sn-glycero-3-phosphoethanolamine + H2O = 1-hexadecanoyl-sn-glycero-3-phosphoethanolamine + (5Z,8Z,11Z,14Z)-eicosatetraenoate + H(+). It carries out the reaction 1-octadecanoyl-2-(5Z,8Z,11Z,14Z-eicosatetraenoyl)-sn-glycero-3-phospho-(1D-myo-inositol) + H2O = 1-octadecanoyl-sn-glycero-3-phospho-(1D-myo-inositol) + (5Z,8Z,11Z,14Z)-eicosatetraenoate + H(+). It catalyses the reaction 1-hexadecanoyl-2-(9Z-octadecenoyl)-sn-glycero-3-phosphoglycerol + H2O = 1-hexadecanoyl-sn-glycero-3-phosphoglycerol + (9Z)-octadecenoate + H(+). The catalysed reaction is N-hexadecanoyl-1,2-di-(9Z-octadecenoyl)-sn-glycero-3-phosphoethanolamine + H2O = N-hexadecanoyl-1-(9Z-octadecenoyl)-sn-glycero-3-phosphoethanolamine + (9Z)-octadecenoate + H(+). The enzyme catalyses 1'-[1,2-di-(9Z-octadecenoyl)-sn-glycero-3-phospho]-3'-[1-(9Z-octadecenoyl)-sn-glycero-3-phospho]-glycerol + H2O = 1',3'-bis-[1-(9Z-octadecenoyl)-sn-glycero-3-phospho]-glycerol + (9Z)-octadecenoate + H(+). It carries out the reaction 1',3'-bis[1,2-di-(9Z-octadecenoyl)-sn-glycero-3-phospho]-glycerol + H2O = 1'-[1,2-di-(9Z-octadecenoyl)-sn-glycero-3-phospho]-3'-[1-(9Z-octadecenoyl)-sn-glycero-3-phospho]-glycerol + (9Z)-octadecenoate + H(+). Its pathway is lipid metabolism; phospholipid metabolism. It functions in the pathway lipid metabolism; leukotriene B4 biosynthesis. It participates in lipid metabolism; leukotriene C4 biosynthesis. Its activity is regulated as follows. Activated by cardiolipin. Functionally, secretory calcium-dependent phospholipase A2 that primarily targets extracellular phospholipids. Hydrolyzes the ester bond of the fatty acyl group attached at sn-2 position of phospholipids (phospholipase A2 activity), preferentially releasing fatty acyl groups with a low degree of unsaturation such as oleoyl (C18:1) and linoleoyl (C18:2) groups. Hydrolyzes low-density lipoprotein (LDL) phospholipids releasing unsaturated fatty acids that drive macrophage polarization toward an M2 phenotype. May act in an autocrine and paracrine manner. Contributes to lipid remodeling of cellular membranes at different subcellular locations and generation of lipid mediators involved in pathogen clearance. Cleaves sn-2 fatty acyl chains of cardiolipin, a major component of the inner membrane of mitochondria and bacterial membranes. Promotes phagocytosis of bacteria in macrophages through production of lysophosphatidylethanolamines. Displays bactericidal activity against Gram-positive bacteria by directly hydrolyzing phospholipids of the bacterial membrane. Promotes phagocytosis and killing of ingested fungi likely through controlling phagosome-lysosome fusion and phagosome maturation. Plays a role in biosynthesis of cysteinyl leukotrienes (CysLTs) in myeloid cells. In eosinophils, triggers perinuclear arachidonate release and LTC4 synthesis in a PLA2G4A-independent way. In neutrophils, amplifies CysLTs biosynthesis initiated by PLA2G4A. Promotes immune complex clearance in macrophages via stimulating synthesis of CysLTs, which act through CYSLTR1 to trigger phagocytosis. May regulate antigen processing in antigen-presenting cells. In pulmonary macrophages regulates IL33 production required for activation of group 2 innate lymphoid cells. May play a role in the biosynthesis of N-acyl ethanolamines that regulate energy metabolism. Hydrolyzes N-acyl phosphatidylethanolamines to N-acyl lysophosphatidylethanolamines, which are further cleaved by a lysophospholipase D to release N-acyl ethanolamines. This chain is Phospholipase A2 group V (PLA2G5), found in Homo sapiens (Human).